The following is a 453-amino-acid chain: MARLFGTDGIRALANGDLLTPELAMAVARAAAVVFTHGRVAKRRQVLGKRPVAIVARDPRISGDFLVAAISAGLASSGVDVLDAGVIPTPAVAFLVKNANADFGFMISASHNPGYDNGVKIFAHGGVKLPDVVEDRIEYFLDKQKLSPIGSKVGRITRFVDAEDRYQMHLLSTLFTRIDGVKVVIDCANGAASGVSPDVFKSAGAAVKVICADPNGVNINDGVGSAYPERLRAEVIRNSATLGLAFDGDADRCIAVDSNGNTVDGDQIMAILARSMQQRGTLRNKTLVTTIMSNIGLDRAMKKLGINLKRTQVGDRYVIEAMTQGGFNIGGEQSGHIILSDYSTAGDGILAGLHLCAEIIRTGKSLTDLASIMEIVPQVTANIETDDPTTLLNNKKIRHEISRIEKSLKGRVVIRPSGTEPLIRIMVEDLNPEKAERACSHLADFFKQEIQKS.

Residue Ser-110 is the Phosphoserine intermediate of the active site. 4 residues coordinate Mg(2+): Ser-110, Asp-247, Asp-249, and Asp-251. Ser-110 is modified (phosphoserine).

Belongs to the phosphohexose mutase family. The cofactor is Mg(2+). Post-translationally, activated by phosphorylation.

It catalyses the reaction alpha-D-glucosamine 1-phosphate = D-glucosamine 6-phosphate. Its function is as follows. Catalyzes the conversion of glucosamine-6-phosphate to glucosamine-1-phosphate. In Tropheryma whipplei (strain TW08/27) (Whipple's bacillus), this protein is Phosphoglucosamine mutase.